We begin with the raw amino-acid sequence, 910 residues long: 2-oxoglutarate dehydrogenase E1 component (910 aa).

Belongs to the alpha-ketoglutarate dehydrogenase family. As to quaternary structure, homodimer. Part of the 2-oxoglutarate dehydrogenase (OGDH) complex composed of E1 (2-oxoglutarate dehydrogenase), E2 (dihydrolipoamide succinyltransferase) and E3 (dihydrolipoamide dehydrogenase); the complex contains multiple copies of the three enzymatic components (E1, E2 and E3). The cofactor is thiamine diphosphate.

It catalyses the reaction N(6)-[(R)-lipoyl]-L-lysyl-[protein] + 2-oxoglutarate + H(+) = N(6)-[(R)-S(8)-succinyldihydrolipoyl]-L-lysyl-[protein] + CO2. Functionally, E1 component of the 2-oxoglutarate dehydrogenase (OGDH) complex which catalyzes the decarboxylation of 2-oxoglutarate, the first step in the conversion of 2-oxoglutarate to succinyl-CoA and CO(2). In Staphylococcus aureus (strain N315), this protein is 2-oxoglutarate dehydrogenase E1 component.